Here is a 330-residue protein sequence, read N- to C-terminus: Probable cell division protein WhiA (330 aa).

The H-T-H motif DNA-binding region spans 275–308 (SLDELGRLSDPPLTKDAIAGRIRRLLAMADRRAE).

The protein belongs to the WhiA family.

In terms of biological role, involved in cell division and chromosome segregation. This is Probable cell division protein WhiA from Kocuria rhizophila (strain ATCC 9341 / DSM 348 / NBRC 103217 / DC2201).